The following is a 1067-amino-acid chain: Zinc finger MIZ domain-containing protein 1 (1067 aa).

The tract at residues 1 to 120 is sufficient for transactivation activity; sufficient for interaction with NOTCH1; sequence MNSMDRHIQQ…HQKSRQSDPP (120 aa). A Glycyl lysine isopeptide (Lys-Gly) (interchain with G-Cter in SUMO2) cross-link involves residue K91. Disordered stretches follow at residues 112-141 and 327-542; these read QKSR…TLSH and NSQF…PFPP. Low complexity predominate over residues 128 to 141; that stretch reads PLSSMSSMKPTLSH. A compositionally biased stretch (polar residues) spans 413-429; that stretch reads YGNQQYGPNSQFPTQPG. Residues 431–440 are compositionally biased toward pro residues; sequence YPAPNPPRPL. Residues 479–497 show a composition bias toward low complexity; it reads NNTFSGSSYSNYSQGNVNR. Over residues 510-521 the composition is skewed to pro residues; it reads SPVPGNPTPPMT. The SP-RING-type zinc finger occupies 727–808; it reads GEDGVEQTAI…MWGILNAIQH (82 aa). C758, H760, C781, and C784 together coordinate Zn(2+). Residues K834 and K843 each participate in a glycyl lysine isopeptide (Lys-Gly) (interchain with G-Cter in SUMO2) cross-link. A transactivation domain region spans residues 837-1067; it reads PDGIPSKRFK…DDLLSLFENN (231 aa). The span at 868 to 879 shows a compositional bias: pro residues; that stretch reads GPSPYPLPPPPG. The interval 868–1067 is disordered; sequence GPSPYPLPPP…DDLLSLFENN (200 aa). 2 stretches are compositionally biased toward polar residues: residues 881-895 and 951-961; these read TNSN…NYQG and SSDQPHPSIQQ. The segment covering 981-996 has biased composition (pro residues); the sequence is APPPPPSQPPRQPPQA. Positions 1040–1067 are enriched in low complexity; that stretch reads PDELLSYLDPPDLPSNSNDDLLSLFENN.

In terms of assembly, interacts with AR, but not with ESR1, NR3C1, PGR, THRB nor VDR. Interacts with NOTCH1 and RBPJ. Interacts with SMARCA4. Interacts (via SP-RING-type domain) with SMAD3 and SMAD4 (via MH2 domain). Expressed most abundantly in ovary and, at lower levels, in prostate, spleen and testis. Weak expression, if any, in thymus, small intestine, colon and peripheral blood leukocytes.

The protein localises to the nucleus. Its subcellular location is the nucleoplasm. It is found in the cytoplasm. Acts as a transcriptional coactivator. Increases ligand-dependent transcriptional activity of AR and promotes AR sumoylation. The stimulation of AR activity is dependent upon sumoylation. Also functions as a transcriptional coactivator in the TGF-beta signaling pathway by increasing the activity of the SMAD3/SMAD4 transcriptional complex. Involved in transcriptional activation of a subset of NOTCH1 target genes including MYC. Involved in thymocyte and T cell development. Involved in the regulation of postmitotic positioning of pyramidal neurons in the developing cerebral cortex. The polypeptide is Zinc finger MIZ domain-containing protein 1 (Homo sapiens (Human)).